The sequence spans 40 residues: Allophycocyanin alpha-B chain (40 aa).

The protein belongs to the phycobiliprotein family. Heterodimer of an alpha and a beta chain. Contains one covalently linked bilin chromophore.

It localises to the cellular thylakoid membrane. In terms of biological role, light-harvesting photosynthetic bile pigment-protein from the phycobiliprotein complex. Allophycocyanin has a maximum absorption at approximately 650 nanometers. This is Allophycocyanin alpha-B chain from Mastigocladus laminosus (Fischerella sp.).